A 945-amino-acid chain; its full sequence is Isoleucine--tRNA ligase (945 aa).

A 'HIGH' region motif is present at residues 66-76 (PYANGDIHLGH). Glu581 provides a ligand contact to L-isoleucyl-5'-AMP. A 'KMSKS' region motif is present at residues 622–626 (KMSKS). Residue Lys625 participates in ATP binding. Residues Cys908, Cys911, Cys928, and Cys931 each coordinate Zn(2+).

This sequence belongs to the class-I aminoacyl-tRNA synthetase family. IleS type 1 subfamily. In terms of assembly, monomer. It depends on Zn(2+) as a cofactor.

The protein localises to the cytoplasm. The catalysed reaction is tRNA(Ile) + L-isoleucine + ATP = L-isoleucyl-tRNA(Ile) + AMP + diphosphate. Functionally, catalyzes the attachment of isoleucine to tRNA(Ile). As IleRS can inadvertently accommodate and process structurally similar amino acids such as valine, to avoid such errors it has two additional distinct tRNA(Ile)-dependent editing activities. One activity is designated as 'pretransfer' editing and involves the hydrolysis of activated Val-AMP. The other activity is designated 'posttransfer' editing and involves deacylation of mischarged Val-tRNA(Ile). The sequence is that of Isoleucine--tRNA ligase from Burkholderia ambifaria (strain MC40-6).